The chain runs to 122 residues: Large ribosomal subunit protein uL14 (122 aa).

It belongs to the universal ribosomal protein uL14 family. As to quaternary structure, part of the 50S ribosomal subunit. Forms a cluster with proteins L3 and L19. In the 70S ribosome, L14 and L19 interact and together make contacts with the 16S rRNA in bridges B5 and B8.

Binds to 23S rRNA. Forms part of two intersubunit bridges in the 70S ribosome. In Rippkaea orientalis (strain PCC 8801 / RF-1) (Cyanothece sp. (strain PCC 8801)), this protein is Large ribosomal subunit protein uL14.